The following is a 310-amino-acid chain: Olfactory receptor 2A4 (310 aa).

Residues 1–24 (MGDNITSIREFLLLGFPVGPRIQM) lie on the Extracellular side of the membrane. The N-linked (GlcNAc...) asparagine glycan is linked to N4. The helical transmembrane segment at 25–48 (LLFGLFSLFYVFTLLGNGTILGLI) threads the bilayer. At 49 to 56 (SLDSRLHA) the chain is on the cytoplasmic side. A helical membrane pass occupies residues 57–78 (PMYFFLSHLAVVDIAYACNTVP). Over 79–99 (RMLVNLLHPAKPISFAGRMMQ) the chain is Extracellular. Residues 100–119 (TFLFSTFAVTECLLLVVMSY) traverse the membrane as a helical segment. The Cytoplasmic segment spans residues 120 to 138 (DLYVAICHPLRYLAIMTWR). The chain crosses the membrane as a helical span at residues 139-157 (VCITLAVTSWTTGVLLSLI). Topologically, residues 158–194 (HLVLLLPLPFCRPQKIYHFFCEILAVLKLACADTHIN) are extracellular. A helical transmembrane segment spans residues 195–218 (ENMVLAGAISGLVGPLSTIVVSYM). Residues 219 to 235 (CILCAILQIQSREVQRK) lie on the Cytoplasmic side of the membrane. A helical transmembrane segment spans residues 236-258 (AFRTCFSHLCVIGLVYGTAIIMY). Residues 259–271 (VGPRYGNPKEQKK) lie on the Extracellular side of the membrane. A helical transmembrane segment spans residues 272-291 (YLLLFHSLFNPMLNPLICSL). Over 292 to 310 (RNSEVKNTLKRVLGVERAL) the chain is Cytoplasmic.

The protein belongs to the G-protein coupled receptor 1 family.

Its subcellular location is the cell membrane. Odorant receptor. This Homo sapiens (Human) protein is Olfactory receptor 2A4 (OR2A4).